Reading from the N-terminus, the 342-residue chain is Ribosomal RNA small subunit methyltransferase C (342 aa).

This sequence belongs to the methyltransferase superfamily. RsmC family. As to quaternary structure, monomer.

The protein localises to the cytoplasm. It catalyses the reaction guanosine(1207) in 16S rRNA + S-adenosyl-L-methionine = N(2)-methylguanosine(1207) in 16S rRNA + S-adenosyl-L-homocysteine + H(+). Its function is as follows. Specifically methylates the guanine in position 1207 of 16S rRNA in the 30S particle. This Salmonella arizonae (strain ATCC BAA-731 / CDC346-86 / RSK2980) protein is Ribosomal RNA small subunit methyltransferase C.